The sequence spans 325 residues: MDKSSGELVTLTPNNNNTVQPVALMRLGVFVPTLKSLKNSKKNTLSRTDATEELTRLSLARAEGFDKVEITGPRLDMDNDFKTWVGIIHSFARHNVIGDKVELPFVEFAKLCGIPSSQSSRSLRERISPSLKRIAGTVISFSRTDEKHTREYITHLVQSAYYDTERDIVQLQADPRLFELYQFDRKVLLQLKAINALKRRESAQALYTFIESLPRDPAPISLARLRARLNLKSPVFSQNQTVRRAMEQLREIGYLDYTEIQRGRTKFFCIHYRRPRLKAPNDESKENPLPPSPAEKVSPEMAEKLALLEKLGITLDDLEKLFKSR.

Residues 279–298 (APNDESKENPLPPSPAEKVS) are disordered.

Belongs to the initiator RepB protein family.

In terms of biological role, this protein is essential for plasmid replication; it is involved in copy control functions. In vitro, binds to the DNA repeat units, BCDD'D'', EFG and HIJ. The chain is RepFIB replication protein A (repA) from Escherichia coli.